The chain runs to 782 residues: Calcium-independent phospholipase A2-gamma (782 aa).

A glycan (N-linked (GlcNAc...) asparagine) is linked at N4. Disordered regions lie at residues 219–275 and 317–343; these read EKMS…PSAI and SKSQ…AEEK. Residues 220 to 248 show a composition bias toward basic and acidic residues; the sequence is KMSQQKENEHFRDKSELEDKKVEEGKLRS. An N-linked (GlcNAc...) asparagine glycan is attached at N361. Positions 445–640 constitute a PNPLA domain; that stretch reads LSIDGGGTRG…LLNNPSALAM (196 aa). Positions 449–454 match the GXGXXG motif; that stretch reads GGGTRG. A helical membrane pass occupies residues 475-495; that stretch reads LFDYICGVSTGAILAFMLGLF. Residues 481-485 carry the GXSXG motif; sequence GVSTG. S483 acts as the Nucleophile in catalysis. D627 acts as the Proton acceptor in catalysis. Positions 627 to 629 match the DGA/G motif; it reads DGG. At K736 the chain carries N6-succinyllysine.

In terms of tissue distribution, expressed in parenchymal tissues including heart, skeletal muscle, placenta, brain, liver and pancreas. Also expressed in bronchial epithelial cells and kidney. Highest expression is observed in skeletal muscle and heart.

Its subcellular location is the endoplasmic reticulum membrane. It is found in the mitochondrion membrane. It localises to the peroxisome membrane. It carries out the reaction a 1,2-diacyl-sn-glycero-3-phosphocholine + H2O = a 1-acyl-sn-glycero-3-phosphocholine + a fatty acid + H(+). The enzyme catalyses a 1,2-diacyl-sn-glycero-3-phosphocholine + H2O = a 2-acyl-sn-glycero-3-phosphocholine + a fatty acid + H(+). The catalysed reaction is a 1,2-diacyl-sn-glycero-3-phosphoethanolamine + H2O = a 1-acyl-sn-glycero-3-phosphoethanolamine + a fatty acid + H(+). It catalyses the reaction a 1-O-(1Z-alkenyl)-2-acyl-sn-glycero-3-phosphocholine + H2O = a 1-O-(1Z-alkenyl)-sn-glycero-3-phosphocholine + a fatty acid + H(+). It carries out the reaction a 1-acyl-sn-glycero-3-phosphocholine + H2O = sn-glycerol 3-phosphocholine + a fatty acid + H(+). The enzyme catalyses 1-acyl-2-(9Z,12Z)-octadecadienoyl-sn-glycero-3-phosphocholine + H2O = a 1-acyl-sn-glycero-3-phosphocholine + (9Z,12Z)-octadecadienoate + H(+). The catalysed reaction is 1-acyl-2-(5Z,8Z,11Z,14Z-eicosatetraenoyl)-sn-glycero-3-phosphocholine + H2O = a 1-acyl-sn-glycero-3-phosphocholine + (5Z,8Z,11Z,14Z)-eicosatetraenoate + H(+). It catalyses the reaction 1-hexadecanoyl-2-(5Z,8Z,11Z,14Z-eicosatetraenoyl)-sn-glycero-3-phosphocholine + H2O = 1-hexadecanoyl-sn-glycero-3-phosphocholine + (5Z,8Z,11Z,14Z)-eicosatetraenoate + H(+). It carries out the reaction 1-octadecanoyl-2-(9Z-octadecenoyl)-sn-glycero-3-phosphocholine + H2O = 1-octadecanoyl-sn-glycero-3-phosphocholine + (9Z)-octadecenoate + H(+). The enzyme catalyses 1-hexadecanoyl-2-(9Z-octadecenoyl)-sn-glycero-3-phosphocholine + H2O = 1-hexadecanoyl-sn-glycero-3-phosphocholine + (9Z)-octadecenoate + H(+). The catalysed reaction is 1-hexadecanoyl-2-(9Z,12Z-octadecadienoyl)-sn-glycero-3-phosphocholine + H2O = (9Z,12Z)-octadecadienoate + 1-hexadecanoyl-sn-glycero-3-phosphocholine + H(+). It catalyses the reaction 1-acyl-2-(9Z,12Z)-octadecadienoyl-sn-glycero-3-phosphoethanolamine + H2O = a 1-acyl-sn-glycero-3-phosphoethanolamine + (9Z,12Z)-octadecadienoate + H(+). It carries out the reaction 1-acyl-2-(5Z,8Z,11Z,14Z)-eicosatetraenoyl-sn-glycero-3-phosphoethanolamine + H2O = a 1-acyl-sn-glycero-3-phosphoethanolamine + (5Z,8Z,11Z,14Z)-eicosatetraenoate + H(+). The enzyme catalyses 1-hexadecanoyl-2-(5Z,8Z,11Z,14Z-eicosatetraenoyl)-sn-glycero-3-phosphoethanolamine + H2O = 1-hexadecanoyl-sn-glycero-3-phosphoethanolamine + (5Z,8Z,11Z,14Z)-eicosatetraenoate + H(+). The catalysed reaction is 1-hexadecanoyl-2-(5Z,8Z,11Z,14Z-eicosatetraenoyl)-sn-glycero-3-phosphocholine + H2O = 2-(5Z,8Z,11Z,14Z)-eicosatetraenoyl-sn-glycero-3-phosphocholine + hexadecanoate + H(+). It catalyses the reaction 1-octadecanoyl-2-(9Z-octadecenoyl)-sn-glycero-3-phosphocholine + H2O = 2-(9Z-octadecenoyl)-sn-glycero-3-phosphocholine + octadecanoate + H(+). It carries out the reaction 1-hexadecanoyl-2-(4Z,7Z,10Z,13Z,16Z,19Z-docosahexaenoyl)-sn-glycero-3-phosphocholine + H2O = 2-(4Z,7Z,10Z,13Z,16Z,19Z-docosahexaenoyl)-sn-glycero-3-phosphocholine + hexadecanoate + H(+). The enzyme catalyses 1-O-(1Z)-hexadecenyl-2 (5Z,8Z,11Z,14Z)-eicosatetraenoyl-sn-glycero-3-phosphocholine + H2O = 1-(1Z-hexadecenyl)-sn-glycero-3-phosphocholine + (5Z,8Z,11Z,14Z)-eicosatetraenoate + H(+). The catalysed reaction is 1-O-(1Z-hexadecenyl)-2-(9Z-octadecenoyl)-sn-glycero-3-phosphocholine + H2O = 1-(1Z-hexadecenyl)-sn-glycero-3-phosphocholine + (9Z)-octadecenoate + H(+). It catalyses the reaction 1-hexadecanoyl-sn-glycero-3-phosphocholine + H2O = sn-glycerol 3-phosphocholine + hexadecanoate + H(+). It carries out the reaction 1',3'-bis-[1,2-di-(9Z,12Z-octadecadienoyl)-sn-glycero-3-phospho]-glycerol + H2O = 1'-[1,2-di-(9Z,12Z-octadecadienoyl)-sn-glycero-3-phospho]-3'-[1-(9Z,12Z-octadecadienoyl)-sn-glycero-3-phospho]-glycerol + (9Z,12Z)-octadecadienoate + H(+). The enzyme catalyses 1'-[1-acyl-2-(9-hydroxy-(10E,12Z)-octadecadienoyl)-sn-glycero-3-phospho]-3'-[1,2-diacyl-sn-glycero-3-phospho]-glycerol + H2O = 9-hydroxy-(10E,12Z)-octadecadienoate + 1'-[1,2-diacyl-sn-glycero-3-phospho],3'-[1-acyl-sn-glycero-3-phospho]-glycerol + H(+). The protein operates within phospholipid metabolism. Its activity is regulated as follows. Calcium-independent phospholipase. Inhibited by (E)-6-bromomethylene-3-1-naphthalenyl-2H-tetrahydropyran-2-one (BEL). The activity toward 1-hexadecanoyl-2-(5Z,8Z,11Z,14Z-eicosatetraenoyl)-sn-glycero-3-phosphocholine is stimulated by cardiolipin. Its function is as follows. Calcium-independent and membrane-bound phospholipase, that catalyzes the esterolytic cleavage of fatty acids from glycerophospholipids to yield free fatty acids and lysophospholipids, hence regulating membrane physical properties and the release of lipid second messengers and growth factors. Hydrolyzes phosphatidylethanolamine, phosphatidylcholine and probably phosphatidylinositol with a possible preference for the former. Also has a broad substrate specificity in terms of fatty acid moieties, hydrolyzing saturated and mono-unsaturated fatty acids at nearly equal rates from either the sn-1 or sn-2 position in diacyl phosphatidylcholine. However, has a weak activity toward polyunsaturated fatty acids at the sn-2 position, and thereby favors the production of 2-arachidonoyl lysophosphatidylcholine, a key branch point metabolite in eicosanoid signaling. On the other hand, can produce arachidonic acid from the sn-1 position of diacyl phospholipid and from the sn-2 position of arachidonate-containing plasmalogen substrates. Therefore, plays an important role in the mobilization of arachidonic acid in response to cellular stimuli and the generation of lipid second messengers. Can also hydrolyze lysophosphatidylcholine. In the mitochondrial compartment, catalyzes the hydrolysis and release of oxidized aliphatic chains from cardiolipin and integrates mitochondrial bioenergetics and signaling. It is essential for maintaining efficient bioenergetic mitochondrial function through tailoring mitochondrial membrane lipid metabolism and composition. The chain is Calcium-independent phospholipase A2-gamma from Homo sapiens (Human).